A 508-amino-acid chain; its full sequence is Probable cytosol aminopeptidase (508 aa).

Residues K274 and D279 each coordinate Mn(2+). The active site involves K286. The Mn(2+) site is built by D297, D356, and E358. The active site involves R360.

Belongs to the peptidase M17 family. The cofactor is Mn(2+).

Its subcellular location is the cytoplasm. It carries out the reaction Release of an N-terminal amino acid, Xaa-|-Yaa-, in which Xaa is preferably Leu, but may be other amino acids including Pro although not Arg or Lys, and Yaa may be Pro. Amino acid amides and methyl esters are also readily hydrolyzed, but rates on arylamides are exceedingly low.. It catalyses the reaction Release of an N-terminal amino acid, preferentially leucine, but not glutamic or aspartic acids.. Its function is as follows. Presumably involved in the processing and regular turnover of intracellular proteins. Catalyzes the removal of unsubstituted N-terminal amino acids from various peptides. In Paraburkholderia phytofirmans (strain DSM 17436 / LMG 22146 / PsJN) (Burkholderia phytofirmans), this protein is Probable cytosol aminopeptidase.